Here is a 315-residue protein sequence, read N- to C-terminus: ATP synthase gamma chain (315 aa).

This sequence belongs to the ATPase gamma chain family. In terms of assembly, F-type ATPases have 2 components, CF(1) - the catalytic core - and CF(0) - the membrane proton channel. CF(1) has five subunits: alpha(3), beta(3), gamma(1), delta(1), epsilon(1). CF(0) has three main subunits: a, b and c.

It localises to the cellular thylakoid membrane. Produces ATP from ADP in the presence of a proton gradient across the membrane. The gamma chain is believed to be important in regulating ATPase activity and the flow of protons through the CF(0) complex. The chain is ATP synthase gamma chain from Nostoc punctiforme (strain ATCC 29133 / PCC 73102).